A 321-amino-acid chain; its full sequence is tRNA U34 carboxymethyltransferase (321 aa).

Residues Lys90, Trp104, Lys109, Gly129, 151–153 (DPT), 180–181 (IE), Met195, Tyr199, and Arg314 contribute to the carboxy-S-adenosyl-L-methionine site.

It belongs to the class I-like SAM-binding methyltransferase superfamily. CmoB family. Homotetramer.

It carries out the reaction carboxy-S-adenosyl-L-methionine + 5-hydroxyuridine(34) in tRNA = 5-carboxymethoxyuridine(34) in tRNA + S-adenosyl-L-homocysteine + H(+). In terms of biological role, catalyzes carboxymethyl transfer from carboxy-S-adenosyl-L-methionine (Cx-SAM) to 5-hydroxyuridine (ho5U) to form 5-carboxymethoxyuridine (cmo5U) at position 34 in tRNAs. The polypeptide is tRNA U34 carboxymethyltransferase (Pasteurella multocida (strain Pm70)).